A 301-amino-acid polypeptide reads, in one-letter code: Glycine--tRNA ligase alpha subunit (301 aa).

The protein belongs to the class-II aminoacyl-tRNA synthetase family. As to quaternary structure, tetramer of two alpha and two beta subunits.

The protein localises to the cytoplasm. The catalysed reaction is tRNA(Gly) + glycine + ATP = glycyl-tRNA(Gly) + AMP + diphosphate. The chain is Glycine--tRNA ligase alpha subunit from Alteromonas mediterranea (strain DSM 17117 / CIP 110805 / LMG 28347 / Deep ecotype).